Here is a 269-residue protein sequence, read N- to C-terminus: 4-hydroxy-tetrahydrodipicolinate reductase (269 aa).

11–16 (GPIGRM) contributes to the NAD(+) binding site. Lys39 contacts NADP(+). NAD(+) contacts are provided by residues 101–103 (GTT) and 125–128 (ASNF). His158 functions as the Proton donor/acceptor in the catalytic mechanism. His159 provides a ligand contact to (S)-2,3,4,5-tetrahydrodipicolinate. Lys162 serves as the catalytic Proton donor. 168-169 (GT) lines the (S)-2,3,4,5-tetrahydrodipicolinate pocket.

This sequence belongs to the DapB family. As to quaternary structure, homotetramer.

The protein resides in the cytoplasm. The catalysed reaction is (S)-2,3,4,5-tetrahydrodipicolinate + NAD(+) + H2O = (2S,4S)-4-hydroxy-2,3,4,5-tetrahydrodipicolinate + NADH + H(+). It catalyses the reaction (S)-2,3,4,5-tetrahydrodipicolinate + NADP(+) + H2O = (2S,4S)-4-hydroxy-2,3,4,5-tetrahydrodipicolinate + NADPH + H(+). It functions in the pathway amino-acid biosynthesis; L-lysine biosynthesis via DAP pathway; (S)-tetrahydrodipicolinate from L-aspartate: step 4/4. Its function is as follows. Catalyzes the conversion of 4-hydroxy-tetrahydrodipicolinate (HTPA) to tetrahydrodipicolinate. This chain is 4-hydroxy-tetrahydrodipicolinate reductase, found in Buchnera aphidicola subsp. Acyrthosiphon pisum (strain APS) (Acyrthosiphon pisum symbiotic bacterium).